The chain runs to 468 residues: tRNA (guanine(37)-N(1))-methyltransferase 1 (468 aa).

Residues His-207, Asp-245–Leu-246, and Asp-273–Ala-274 each bind S-adenosyl-L-methionine. Positions Lys-301 to Asp-348 are disordered. Polar residues predominate over residues Gly-309–Ile-325. Asn-380 provides a ligand contact to S-adenosyl-L-methionine.

This sequence belongs to the class I-like SAM-binding methyltransferase superfamily. TRM5/TYW2 family. In terms of assembly, monomer.

It localises to the mitochondrion matrix. The protein localises to the nucleus. It is found in the cytoplasm. The enzyme catalyses guanosine(37) in tRNA + S-adenosyl-L-methionine = N(1)-methylguanosine(37) in tRNA + S-adenosyl-L-homocysteine + H(+). Functionally, specifically methylates the N1 position of guanosine-37 in various cytoplasmic and mitochondrial tRNAs. Methylation is not dependent on the nature of the nucleoside 5' of the target nucleoside. This is the first step in the biosynthesis of wybutosine (yW), a modified base adjacent to the anticodon of tRNAs and required for accurate decoding. The chain is tRNA (guanine(37)-N(1))-methyltransferase 1 from Arabidopsis thaliana (Mouse-ear cress).